The chain runs to 308 residues: 1D-myo-inositol 2-acetamido-2-deoxy-alpha-D-glucopyranoside deacetylase (308 aa).

Zn(2+) is bound by residues His37, Asp40, and His171.

Belongs to the MshB deacetylase family. The cofactor is Zn(2+).

The catalysed reaction is 1D-myo-inositol 2-acetamido-2-deoxy-alpha-D-glucopyranoside + H2O = 1D-myo-inositol 2-amino-2-deoxy-alpha-D-glucopyranoside + acetate. Functionally, catalyzes the deacetylation of 1D-myo-inositol 2-acetamido-2-deoxy-alpha-D-glucopyranoside (GlcNAc-Ins) in the mycothiol biosynthesis pathway. This Mycobacterium sp. (strain KMS) protein is 1D-myo-inositol 2-acetamido-2-deoxy-alpha-D-glucopyranoside deacetylase.